The primary structure comprises 593 residues: NADH-quinone oxidoreductase subunit C/D (593 aa).

An NADH dehydrogenase I subunit C region spans residues 1–184 (MTADNAIFIP…DPYSLTLAKQ (184 aa)). The tract at residues 208-593 (DYMFLNLGPN…IDFVMADVDR (386 aa)) is NADH dehydrogenase I subunit D.

The protein in the N-terminal section; belongs to the complex I 30 kDa subunit family. This sequence in the C-terminal section; belongs to the complex I 49 kDa subunit family. In terms of assembly, NDH-1 is composed of 13 different subunits. Subunits NuoB, CD, E, F, and G constitute the peripheral sector of the complex.

The protein localises to the cell inner membrane. It catalyses the reaction a quinone + NADH + 5 H(+)(in) = a quinol + NAD(+) + 4 H(+)(out). NDH-1 shuttles electrons from NADH, via FMN and iron-sulfur (Fe-S) centers, to quinones in the respiratory chain. The immediate electron acceptor for the enzyme in this species is believed to be ubiquinone. Couples the redox reaction to proton translocation (for every two electrons transferred, four hydrogen ions are translocated across the cytoplasmic membrane), and thus conserves the redox energy in a proton gradient. In Pseudomonas putida (strain ATCC 700007 / DSM 6899 / JCM 31910 / BCRC 17059 / LMG 24140 / F1), this protein is NADH-quinone oxidoreductase subunit C/D.